Reading from the N-terminus, the 329-residue chain is 4-hydroxythreonine-4-phosphate dehydrogenase (329 aa).

Residues H136 and T137 each contribute to the substrate site. The a divalent metal cation site is built by H166, H211, and H266. Substrate-binding residues include K274, N283, and R292.

Belongs to the PdxA family. Homodimer. It depends on Zn(2+) as a cofactor. The cofactor is Mg(2+). Co(2+) serves as cofactor.

The protein resides in the cytoplasm. It catalyses the reaction 4-(phosphooxy)-L-threonine + NAD(+) = 3-amino-2-oxopropyl phosphate + CO2 + NADH. Its pathway is cofactor biosynthesis; pyridoxine 5'-phosphate biosynthesis; pyridoxine 5'-phosphate from D-erythrose 4-phosphate: step 4/5. Its function is as follows. Catalyzes the NAD(P)-dependent oxidation of 4-(phosphooxy)-L-threonine (HTP) into 2-amino-3-oxo-4-(phosphooxy)butyric acid which spontaneously decarboxylates to form 3-amino-2-oxopropyl phosphate (AHAP). This chain is 4-hydroxythreonine-4-phosphate dehydrogenase, found in Escherichia coli (strain K12 / MC4100 / BW2952).